Reading from the N-terminus, the 349-residue chain is Glycine-rich cell wall structural protein (349 aa).

An N-terminal signal peptide occupies residues methionine 1–cysteine 23.

Its subcellular location is the secreted. It is found in the cell wall. Its function is as follows. Responsible for plasticity of the cell wall. This chain is Glycine-rich cell wall structural protein, found in Arabidopsis thaliana (Mouse-ear cress).